The chain runs to 432 residues: MSIEVDWRAATSGPDGEALAERIRSFIHDKFQQVALPRFIRSVQVHSFDFGTIPPDLEVKDICEPFADFYEEDEDDETSDVSEELVSGHGTQWHRDLNEPPFHEEMAMNRPLRDPFDEAFHSSTLRSPMEHLNPHFLPRAGTPGIPGGTSTLGYHLMSLGGLSGTQTPLAAVAGGTPFANGWTDPGMGASSRGHPSISGPTAVHPSRMEADIDTSNPTSRPSTSSTLPSHPSASNQPSGDATTGKEHGSLAEDEHLDDPMTSGHPLRLPPRMRERRPEDFQVLCHAKYAGDVRLSLTAEILLDYPMPSFVGLPLKLNVTGITFDGVAVIAYIRKRVHFCFLSAEDADALIGSDQQEARGQDDRPWSSADPTASPKRQGGLLREIRVESEIGRKEDGKQVLKNVGKVERFVLAQVRRTFEEEMVFPSFWTFLI.

Residues Met1–Ile432 enclose the SMP-LTD domain. 2 disordered regions span residues Trp182–Arg273 and Gln354–Gln377. Residues Thr214–Ser234 show a composition bias toward low complexity. Composition is skewed to basic and acidic residues over residues Thr243 to Asp253 and Gln355 to Pro364.

It belongs to the MDM12 family. As to quaternary structure, component of the ER-mitochondria encounter structure (ERMES) or MDM complex, composed of mmm1, mdm10, mdm12 and mdm34. A mmm1 homodimer associates with one molecule of mdm12 on each side in a pairwise head-to-tail manner, and the SMP-LTD domains of mmm1 and mdm12 generate a continuous hydrophobic tunnel for phospholipid trafficking.

The protein localises to the mitochondrion outer membrane. The protein resides in the endoplasmic reticulum membrane. Component of the ERMES/MDM complex, which serves as a molecular tether to connect the endoplasmic reticulum (ER) and mitochondria. Components of this complex are involved in the control of mitochondrial shape and protein biogenesis, and function in nonvesicular lipid trafficking between the ER and mitochondria. Mdm12 is required for the interaction of the ER-resident membrane protein mmm1 and the outer mitochondrial membrane-resident beta-barrel protein mdm10. The mdm12-mmm1 subcomplex functions in the major beta-barrel assembly pathway that is responsible for biogenesis of all mitochondrial outer membrane beta-barrel proteins, and acts in a late step after the SAM complex. The mdm10-mdm12-mmm1 subcomplex further acts in the TOM40-specific pathway after the action of the mdm12-mmm1 complex. Essential for establishing and maintaining the structure of mitochondria and maintenance of mtDNA nucleoids. The polypeptide is Mitochondrial distribution and morphology protein 12 (Aspergillus oryzae (strain ATCC 42149 / RIB 40) (Yellow koji mold)).